Reading from the N-terminus, the 295-residue chain is Small ribosomal subunit protein uS2 (295 aa).

The segment at 247-295 (TDKGLTSKNVSKLKQTKKFSKTKNIDEETNTEFEQALNDADENKNSDNA) is disordered.

The protein belongs to the universal ribosomal protein uS2 family.

In Rickettsia conorii (strain ATCC VR-613 / Malish 7), this protein is Small ribosomal subunit protein uS2.